Here is a 309-residue protein sequence, read N- to C-terminus: Minor serine/threonine-protein phosphatase PP2A-1 catalytic subunit (309 aa).

Mn(2+) is bound by residues Asp-57, His-59, Asp-85, and Asn-117. His-118 serves as the catalytic Proton donor. Residues His-167 and His-241 each coordinate Mn(2+). Leu-309 is subject to Leucine methyl ester.

It belongs to the PPP phosphatase family. PP-2A subfamily. Mn(2+) serves as cofactor.

It carries out the reaction O-phospho-L-seryl-[protein] + H2O = L-seryl-[protein] + phosphate. The catalysed reaction is O-phospho-L-threonyl-[protein] + H2O = L-threonyl-[protein] + phosphate. Essential role in cell cycle control. PP2A may be involved in controlling the entry into mitosis, possibly acting as an inhibitor. The chain is Minor serine/threonine-protein phosphatase PP2A-1 catalytic subunit (ppa1) from Schizosaccharomyces pombe (strain 972 / ATCC 24843) (Fission yeast).